The chain runs to 520 residues: Catalase easC (520 aa).

The active site involves histidine 71. Tyrosine 361 contributes to the heme binding site.

It belongs to the catalase family. Heme is required as a cofactor.

Its pathway is alkaloid biosynthesis; ergot alkaloid biosynthesis. Catalase; part of the gene cluster that mediates the biosynthesis of fumiclavanine C, a fungal ergot alkaloid. DmaW catalyzes the first step of ergot alkaloid biosynthesis by condensing dimethylallyl diphosphate (DMAP) and tryptophan to form 4-dimethylallyl-L-tryptophan. The second step is catalyzed by the methyltransferase easF that methylates 4-dimethylallyl-L-tryptophan in the presence of S-adenosyl-L-methionine, resulting in the formation of 4-dimethylallyl-L-abrine. The catalase easC and the FAD-dependent oxidoreductase easE then transform 4-dimethylallyl-L-abrine to chanoclavine-I which is further oxidized by EasD in the presence of NAD(+), resulting in the formation of chanoclavine-I aldehyde. EasA reduces chanoclavine-I aldehyde to dihydrochanoclavine-I aldehyde that spontaneously dehydrates to form 6,8-dimethyl-6,7-didehydroergoline. EasG then catalyzes the reduction of 6,8-dimethyl-6,7-didehydroergoline to form festuclavine. Hydrolysis of festuclavine by easM then leads to the formation of fumigaclavine B which is in turn acetylated by easN to fumigaclavine A. Finally, easL catalyzes the conversion of fumigaclavine A into fumigaclavine C by attaching a dimethylallyl moiety to C-2 of the indole nucleus. This is Catalase easC from Aspergillus fumigatus (strain ATCC MYA-4609 / CBS 101355 / FGSC A1100 / Af293) (Neosartorya fumigata).